We begin with the raw amino-acid sequence, 407 residues long: Carbamoyl phosphate synthase small chain (407 aa).

Residues 1–205 (MTETTPKTAP…LQDGYGEQDA (205 aa)) form a CPSase region. Ser60, Gly257, and Gly259 together coordinate L-glutamine. The 189-residue stretch at 209–397 (HVVALDFGVK…INLIRERKGQ (189 aa)) folds into the Glutamine amidotransferase type-1 domain. Residue Cys286 is the Nucleophile of the active site. Positions 287, 290, 328, 330, and 331 each coordinate L-glutamine. Active-site residues include His370 and Glu372.

Belongs to the CarA family. As to quaternary structure, composed of two chains; the small (or glutamine) chain promotes the hydrolysis of glutamine to ammonia, which is used by the large (or ammonia) chain to synthesize carbamoyl phosphate. Tetramer of heterodimers (alpha,beta)4.

The catalysed reaction is hydrogencarbonate + L-glutamine + 2 ATP + H2O = carbamoyl phosphate + L-glutamate + 2 ADP + phosphate + 2 H(+). It catalyses the reaction L-glutamine + H2O = L-glutamate + NH4(+). It participates in amino-acid biosynthesis; L-arginine biosynthesis; carbamoyl phosphate from bicarbonate: step 1/1. It functions in the pathway pyrimidine metabolism; UMP biosynthesis via de novo pathway; (S)-dihydroorotate from bicarbonate: step 1/3. Small subunit of the glutamine-dependent carbamoyl phosphate synthetase (CPSase). CPSase catalyzes the formation of carbamoyl phosphate from the ammonia moiety of glutamine, carbonate, and phosphate donated by ATP, constituting the first step of 2 biosynthetic pathways, one leading to arginine and/or urea and the other to pyrimidine nucleotides. The small subunit (glutamine amidotransferase) binds and cleaves glutamine to supply the large subunit with the substrate ammonia. This chain is Carbamoyl phosphate synthase small chain, found in Brucella canis (strain ATCC 23365 / NCTC 10854 / RM-666).